Here is a 360-residue protein sequence, read N- to C-terminus: tRNA (guanine(37)-N(1))-methyltransferase (360 aa).

Residues arginine 197, 235-236, and asparagine 283 each bind S-adenosyl-L-methionine; that span reads DL.

This sequence belongs to the class I-like SAM-binding methyltransferase superfamily. TRM5/TYW2 family. As to quaternary structure, monomer.

The protein localises to the mitochondrion matrix. The protein resides in the nucleus. It is found in the cytoplasm. It carries out the reaction guanosine(37) in tRNA + S-adenosyl-L-methionine = N(1)-methylguanosine(37) in tRNA + S-adenosyl-L-homocysteine + H(+). Its function is as follows. Specifically methylates the N1 position of guanosine-37 in various cytoplasmic and mitochondrial tRNAs. Methylation is not dependent on the nature of the nucleoside 5' of the target nucleoside. This is the first step in the biosynthesis of wybutosine (yW), a modified base adjacent to the anticodon of tRNAs and required for accurate decoding. The sequence is that of tRNA (guanine(37)-N(1))-methyltransferase from Encephalitozoon cuniculi (strain GB-M1) (Microsporidian parasite).